A 390-amino-acid chain; its full sequence is DNA primase small subunit PriS (390 aa).

Residues Asp98, Asp100, and Asp296 contribute to the active site.

It belongs to the eukaryotic-type primase small subunit family. As to quaternary structure, heterodimer of a small subunit (PriS) and a large subunit (PriL). It depends on Mg(2+) as a cofactor. The cofactor is Mn(2+).

In terms of biological role, catalytic subunit of DNA primase, an RNA polymerase that catalyzes the synthesis of short RNA molecules used as primers for DNA polymerase during DNA replication. The small subunit contains the primase catalytic core and has DNA synthesis activity on its own. Binding to the large subunit stabilizes and modulates the activity, increasing the rate of DNA synthesis while decreasing the length of the DNA fragments, and conferring RNA synthesis capability. The DNA polymerase activity may enable DNA primase to also catalyze primer extension after primer synthesis. May also play a role in DNA repair. This Methanococcoides burtonii (strain DSM 6242 / NBRC 107633 / OCM 468 / ACE-M) protein is DNA primase small subunit PriS.